The following is a 93-amino-acid chain: Alpha-defensin 2 (93 aa).

The first 19 residues, 1–19 (MKPLVLLSALVLLSFQVQA), serve as a signal peptide directing secretion. A propeptide spanning residues 20-58 (DPIQNTDEETKTEEQSGEEDQAVSVSFGDREGASLQEES) is cleaved from the precursor. Positions 23 to 49 (QNTDEETKTEEQSGEEDQAVSVSFGDR) are disordered. 3 disulfide bridges follow: cysteine 64/cysteine 92, cysteine 66/cysteine 81, and cysteine 71/cysteine 91.

The protein belongs to the alpha-defensin family. In terms of tissue distribution, paneth cells of the small bowel.

The protein resides in the secreted. Has broad-spectrum antimicrobial properties. Has antibacterial activity against the Gram-positive bacterium L.monocytogenes EGD and the Gram-negative bacteria E.coli ML-35p and avirulent S.typhimurium 7953, but not against the mouse-virulent S.typhimurium 14028S. Probably contributes to the antimicrobial barrier function of the small bowel mucosa. This is Alpha-defensin 2 (Defa2) from Mus musculus (Mouse).